Here is a 240-residue protein sequence, read N- to C-terminus: Ribonuclease 3 (240 aa).

An RNase III domain is found at 9–141 (VEEFQKETGI…LLAAIYLDQG (133 aa)). E54 contributes to the Mg(2+) binding site. Residue D58 is part of the active site. Mg(2+) is bound by residues D127 and E130. The active site involves E130. The DRBM domain maps to 168-237 (DYKTALQEIV…ARIAYEKLLK (70 aa)).

Belongs to the ribonuclease III family. Homodimer. Mg(2+) serves as cofactor.

It is found in the cytoplasm. The enzyme catalyses Endonucleolytic cleavage to 5'-phosphomonoester.. Functionally, digests double-stranded RNA. Involved in the processing of primary rRNA transcript to yield the immediate precursors to the large and small rRNAs (23S and 16S). Also processes some mRNAs, and tRNAs when they are encoded in the rRNA operon. Probably processes pre-crRNA and tracrRNA of type II CRISPR loci if present in the organism. The protein is Ribonuclease 3 (rnc) of Thermotoga maritima (strain ATCC 43589 / DSM 3109 / JCM 10099 / NBRC 100826 / MSB8).